We begin with the raw amino-acid sequence, 75 residues long: Protein Tlp homolog (75 aa).

The interval 48 to 75 (KNQRRREALDGMREEIKDEARDKKNGYM) is disordered.

It belongs to the Tlp family.

This chain is Protein Tlp homolog, found in Clostridium botulinum (strain 657 / Type Ba4).